Reading from the N-terminus, the 357-residue chain is Queuosine-tRNA galactosyltransferase (357 aa).

It belongs to the glycosyltransferase 2 family.

The protein resides in the cytoplasm. The enzyme catalyses queuosine(34) in tRNA(Tyr) + UDP-alpha-D-galactose = O-5''-beta-D-galactosylqueuosine(34) in tRNA(Tyr) + UDP + H(+). Functionally, glycosyltransferase that specifically catalyzes galactosylation of cytoplasmic tRNA(Tyr) modified with queuosine at position 34 (queuosine(34)). Galactosylates the cyclopentene hydroxyl group of queuosine(34) in tRNA(Tyr) to form galactosyl-queuosine(34). Mannosylation of queuosine(34) in tRNA(Tyr) is required to slow-down elongation at cognate codons UAC and suppress stop codon readthrough, thereby regulating protein translation. The chain is Queuosine-tRNA galactosyltransferase from Rattus norvegicus (Rat).